Consider the following 503-residue polypeptide: D-alanine--D-alanyl carrier protein ligase (503 aa).

151–152 (TS) contacts ATP. Asp-196 serves as a coordination point for D-alanine. 291–296 (NTYGPT) contributes to the ATP binding site. Position 300 (Val-300) interacts with D-alanine. Residues Asp-382, 393–396 (YNGR), and Lys-491 contribute to the ATP site. A D-alanine-binding site is contributed by Lys-491.

Belongs to the ATP-dependent AMP-binding enzyme family. DltA subfamily.

Its subcellular location is the cytoplasm. It carries out the reaction holo-[D-alanyl-carrier protein] + D-alanine + ATP = D-alanyl-[D-alanyl-carrier protein] + AMP + diphosphate. The protein operates within cell wall biogenesis; lipoteichoic acid biosynthesis. In terms of biological role, catalyzes the first step in the D-alanylation of lipoteichoic acid (LTA), the activation of D-alanine and its transfer onto the D-alanyl carrier protein (Dcp) DltC. In an ATP-dependent two-step reaction, forms a high energy D-alanyl-AMP intermediate, followed by transfer of the D-alanyl residue as a thiol ester to the phosphopantheinyl prosthetic group of the Dcp. D-alanylation of LTA plays an important role in modulating the properties of the cell wall in Gram-positive bacteria, influencing the net charge of the cell wall. The chain is D-alanine--D-alanyl carrier protein ligase from Bacillus anthracis (strain A0248).